The chain runs to 173 residues: NADH-ubiquinone oxidoreductase chain 6 (173 aa).

5 consecutive transmembrane segments (helical) span residues 1–21 (MTYFMFLLLMALVVGLVAVAS), 25–45 (PYFAALGLVVAAGVGCGVLVG), 53–73 (LVLFLIYLGGMLVVFAYSAAL), 87–107 (VLGYVLVYLLGVGLVAGFFWG), and 141–161 (GGMLVICAWVLLLTLLVVLEL).

This sequence belongs to the complex I subunit 6 family.

Its subcellular location is the mitochondrion membrane. The catalysed reaction is a ubiquinone + NADH + 5 H(+)(in) = a ubiquinol + NAD(+) + 4 H(+)(out). In terms of biological role, core subunit of the mitochondrial membrane respiratory chain NADH dehydrogenase (Complex I) that is believed to belong to the minimal assembly required for catalysis. Complex I functions in the transfer of electrons from NADH to the respiratory chain. The immediate electron acceptor for the enzyme is believed to be ubiquinone. The sequence is that of NADH-ubiquinone oxidoreductase chain 6 (MT-ND6) from Carassius auratus (Goldfish).